We begin with the raw amino-acid sequence, 209 residues long: ATP-dependent Clp protease proteolytic subunit 2 (209 aa).

Ser106 (nucleophile) is an active-site residue. His131 is an active-site residue.

It belongs to the peptidase S14 family. Fourteen ClpP subunits assemble into 2 heptameric rings which stack back to back to give a disk-like structure with a central cavity, resembling the structure of eukaryotic proteasomes.

The protein localises to the cytoplasm. It catalyses the reaction Hydrolysis of proteins to small peptides in the presence of ATP and magnesium. alpha-casein is the usual test substrate. In the absence of ATP, only oligopeptides shorter than five residues are hydrolyzed (such as succinyl-Leu-Tyr-|-NHMec, and Leu-Tyr-Leu-|-Tyr-Trp, in which cleavage of the -Tyr-|-Leu- and -Tyr-|-Trp bonds also occurs).. Cleaves peptides in various proteins in a process that requires ATP hydrolysis. Has a chymotrypsin-like activity. Plays a major role in the degradation of misfolded proteins. The protein is ATP-dependent Clp protease proteolytic subunit 2 of Mesorhizobium japonicum (strain LMG 29417 / CECT 9101 / MAFF 303099) (Mesorhizobium loti (strain MAFF 303099)).